The chain runs to 366 residues: uncharacterized protein (366 aa).

This is an uncharacterized protein from Amazona oratrix (yellow-headed parrot).